The chain runs to 809 residues: Glutamine--tRNA ligase (809 aa).

Basic and acidic residues predominate over residues 185–198; that stretch reads DLIKKKTKNNEKKK. The segment at 185–216 is disordered; sequence DLIKKKTKNNEKKKTNSAKKSSDNSASSGPKR. The short motif at 258-268 is the 'HIGH' region element; sequence PEPNGYLHIGH. Residues 259–261 and 265–271 each bind ATP; these read EPN and HIGHSKA. Asp291 contacts L-glutamine. Residue Ser378 is modified to Phosphoserine. Tyr440 serves as a coordination point for L-glutamine. ATP contacts are provided by residues Thr459, 488–489, and 496–498; these read RL and LSK. The 'KMSKS' region signature appears at 495–499; it reads VLSKR.

Belongs to the class-I aminoacyl-tRNA synthetase family.

The catalysed reaction is tRNA(Gln) + L-glutamine + ATP = L-glutaminyl-tRNA(Gln) + AMP + diphosphate. The polypeptide is Glutamine--tRNA ligase (GLN4) (Saccharomyces cerevisiae (strain ATCC 204508 / S288c) (Baker's yeast)).